Here is an 805-residue protein sequence, read N- to C-terminus: Cell division cycle protein 48 homolog (805 aa).

ATP is bound by residues Gly-249 to Thr-256 and Gly-522 to Thr-529. Residues Gly-783–Ser-805 are disordered.

Belongs to the AAA ATPase family.

Its function is as follows. Probably functions in cell division and growth processes. This is Cell division cycle protein 48 homolog (CAFP) from Capsicum annuum (Capsicum pepper).